Consider the following 373-residue polypeptide: Schlafen-like protein 1 (373 aa).

The tract at residues 1–67 (MAALFEENDS…ELSSEEVDIP (67 aa)) is disordered. Positions 247–373 (KAGAKIEFRT…NQVYRLESSV (127 aa)) are SLFN-like fold.

The protein belongs to the Schlafen family. Component of the trimeric PUCH (precursor of 21U RNA 5'-end cleavage holoenzyme) complex; consisting of tofu-1, tofu-2 and either slfl-3 or slfl-4; which is required for processing of piRNA precursors. Within the complex, interacts (via N-terminus) with tofu-2 (via N-terminus); the interaction stabilizes tofu-2 and may form a functional nuclease. Within the complex, required for the interaction of tofu-2 (via N-terminus) with slfl-3 (via N-terminus). Interacts (via residues 82-172) with the PETISCO complex subunit tofu-6 (via residues 120-314); the interaction between the PETISCO and PUCH complex members enhances piRNA production in vivo. As to expression, expressed in the germline.

The protein localises to the cytoplasm. Its function is as follows. Component of the trimeric PUCH (precursor of 21U RNA 5'-end cleavage holoenzyme) complex, that acts as an endoribonuclease processing the 5'-end of precursor Piwi-interacting RNAs (piRNAs). The PUCH complex consists of tofu-1, tofu-2 and either slfl-3 or slfl-4, with tofu-2 exhibiting endoribonuclease activity. PUCH-mediated processing strictly requires a 7-methyl-G cap (m7 G-cap) and an uracil at position three (U3). PUCH also exhibits a strict bias for piRNA precursors with an A or G at position 1. Mature piRNA production is enhanced by the interaction of PUCH with the PETISCO complex, which is stabilizing piRNA precursors and allows their processing by PUCH. In Caenorhabditis elegans, this protein is Schlafen-like protein 1.